The sequence spans 89 residues: Small ribosomal subunit protein uS14A (89 aa).

Belongs to the universal ribosomal protein uS14 family. In terms of assembly, part of the 30S ribosomal subunit. Contacts proteins S3 and S10.

Functionally, binds 16S rRNA, required for the assembly of 30S particles and may also be responsible for determining the conformation of the 16S rRNA at the A site. In Bacillus velezensis (strain DSM 23117 / BGSC 10A6 / LMG 26770 / FZB42) (Bacillus amyloliquefaciens subsp. plantarum), this protein is Small ribosomal subunit protein uS14A.